Reading from the N-terminus, the 28-residue chain is Morintide mO6 (28 aa).

A Chitin-binding type-1 domain is found at 1–28 (NGLCCSQYGFCGTTSAYCSRANGCQSNC). 2 cysteine pairs are disulfide-bonded: cysteine 4–cysteine 18 and cysteine 24–cysteine 28.

In terms of tissue distribution, seeds (at protein level).

Chitin-binding protein which functions in defense against chitin-containing fungal pathogens. The polypeptide is Morintide mO6 (Moringa oleifera (Horseradish tree)).